We begin with the raw amino-acid sequence, 136 residues long: Nucleoside diphosphate kinase (136 aa).

Residues lysine 10, phenylalanine 58, arginine 86, threonine 92, arginine 104, and asparagine 114 each contribute to the ATP site. Histidine 117 acts as the Pros-phosphohistidine intermediate in catalysis.

It belongs to the NDK family. Homotetramer. The cofactor is Mg(2+).

It is found in the cytoplasm. It carries out the reaction a 2'-deoxyribonucleoside 5'-diphosphate + ATP = a 2'-deoxyribonucleoside 5'-triphosphate + ADP. The enzyme catalyses a ribonucleoside 5'-diphosphate + ATP = a ribonucleoside 5'-triphosphate + ADP. In terms of biological role, major role in the synthesis of nucleoside triphosphates other than ATP. The ATP gamma phosphate is transferred to the NDP beta phosphate via a ping-pong mechanism, using a phosphorylated active-site intermediate. This Mycolicibacterium vanbaalenii (strain DSM 7251 / JCM 13017 / BCRC 16820 / KCTC 9966 / NRRL B-24157 / PYR-1) (Mycobacterium vanbaalenii) protein is Nucleoside diphosphate kinase.